We begin with the raw amino-acid sequence, 66 residues long: Conotoxin PnMLCL-01 (66 aa).

A signal peptide spans 1–19; it reads MLCLPVFIILLLLASPAAS. The propeptide occupies 20–45; the sequence is NPLEKRIQSDLIRAALEDADTKNDPR. The residue at position 63 (cysteine 63) is a Cysteine amide.

It belongs to the conotoxin T superfamily. In terms of processing, contains 2 disulfide bonds that can be either 'C1-C3, C2-C4' or 'C1-C4, C2-C3', since these disulfide connectivities have been observed for conotoxins with cysteine framework V (for examples, see AC P0DQQ7 and AC P81755). As to expression, expressed by the venom duct.

The protein resides in the secreted. This chain is Conotoxin PnMLCL-01, found in Conus pennaceus (Feathered cone).